Consider the following 327-residue polypeptide: Nucleotide-binding protein CYB_0992 (327 aa).

12-19 (GLTGAGKT) contacts ATP.

It belongs to the RapZ-like family.

Its function is as follows. Displays ATPase and GTPase activities. The sequence is that of Nucleotide-binding protein CYB_0992 from Synechococcus sp. (strain JA-2-3B'a(2-13)) (Cyanobacteria bacterium Yellowstone B-Prime).